The primary structure comprises 338 residues: Ribosomal RNA small subunit methyltransferase H (338 aa).

Residues 53 to 55 (GGH), Asp72, Tyr99, Asp123, and Gln130 contribute to the S-adenosyl-L-methionine site. 2 disordered regions span residues 276-297 (EITP…PGMG) and 304-323 (TRGA…RSAP).

This sequence belongs to the methyltransferase superfamily. RsmH family.

Its subcellular location is the cytoplasm. The catalysed reaction is cytidine(1402) in 16S rRNA + S-adenosyl-L-methionine = N(4)-methylcytidine(1402) in 16S rRNA + S-adenosyl-L-homocysteine + H(+). Specifically methylates the N4 position of cytidine in position 1402 (C1402) of 16S rRNA. The polypeptide is Ribosomal RNA small subunit methyltransferase H (Rhodococcus jostii (strain RHA1)).